An 89-amino-acid polypeptide reads, in one-letter code: Small ribosomal subunit protein uS15 (89 aa).

The protein belongs to the universal ribosomal protein uS15 family. As to quaternary structure, part of the 30S ribosomal subunit. Forms a bridge to the 50S subunit in the 70S ribosome, contacting the 23S rRNA.

Functionally, one of the primary rRNA binding proteins, it binds directly to 16S rRNA where it helps nucleate assembly of the platform of the 30S subunit by binding and bridging several RNA helices of the 16S rRNA. In terms of biological role, forms an intersubunit bridge (bridge B4) with the 23S rRNA of the 50S subunit in the ribosome. The polypeptide is Small ribosomal subunit protein uS15 (Shewanella baltica (strain OS223)).